A 101-amino-acid polypeptide reads, in one-letter code: Acylphosphatase-1 (101 aa).

At Ser-2 the chain carries N-acetylserine. Residue Ser-2 is modified to N-acetylalanine. An Acylphosphatase-like domain is found at 11 to 101 (SVDYEVFGKV…LDYSDFQIVK (91 aa)). Catalysis depends on residues Arg-26 and Asn-44.

This sequence belongs to the acylphosphatase family. Organ-common type isozyme is found in many different tissues.

The enzyme catalyses an acyl phosphate + H2O = a carboxylate + phosphate + H(+). The polypeptide is Acylphosphatase-1 (ACYP1) (Sus scrofa (Pig)).